Reading from the N-terminus, the 416-residue chain is Serine hydroxymethyltransferase (416 aa).

(6S)-5,6,7,8-tetrahydrofolate contacts are provided by residues Leu118 and 122–124 (GHL). N6-(pyridoxal phosphate)lysine is present on Lys226. (6S)-5,6,7,8-tetrahydrofolate contacts are provided by residues Glu242 and 350-352 (SPF).

This sequence belongs to the SHMT family. In terms of assembly, homodimer. Pyridoxal 5'-phosphate is required as a cofactor.

It localises to the cytoplasm. It carries out the reaction (6R)-5,10-methylene-5,6,7,8-tetrahydrofolate + glycine + H2O = (6S)-5,6,7,8-tetrahydrofolate + L-serine. The protein operates within one-carbon metabolism; tetrahydrofolate interconversion. It participates in amino-acid biosynthesis; glycine biosynthesis; glycine from L-serine: step 1/1. In terms of biological role, catalyzes the reversible interconversion of serine and glycine with tetrahydrofolate (THF) serving as the one-carbon carrier. This reaction serves as the major source of one-carbon groups required for the biosynthesis of purines, thymidylate, methionine, and other important biomolecules. Also exhibits THF-independent aldolase activity toward beta-hydroxyamino acids, producing glycine and aldehydes, via a retro-aldol mechanism. This is Serine hydroxymethyltransferase from Helicobacter acinonychis (strain Sheeba).